The primary structure comprises 308 residues: Aspartate carbamoyltransferase catalytic subunit (308 aa).

Carbamoyl phosphate contacts are provided by R49 and T50. K77 is an L-aspartate binding site. 3 residues coordinate carbamoyl phosphate: R99, H127, and Q130. Positions 160 and 211 each coordinate L-aspartate. 2 residues coordinate carbamoyl phosphate: A252 and P253.

It belongs to the aspartate/ornithine carbamoyltransferase superfamily. ATCase family. Heterododecamer (2C3:3R2) of six catalytic PyrB chains organized as two trimers (C3), and six regulatory PyrI chains organized as three dimers (R2).

The catalysed reaction is carbamoyl phosphate + L-aspartate = N-carbamoyl-L-aspartate + phosphate + H(+). It functions in the pathway pyrimidine metabolism; UMP biosynthesis via de novo pathway; (S)-dihydroorotate from bicarbonate: step 2/3. Its function is as follows. Catalyzes the condensation of carbamoyl phosphate and aspartate to form carbamoyl aspartate and inorganic phosphate, the committed step in the de novo pyrimidine nucleotide biosynthesis pathway. This chain is Aspartate carbamoyltransferase catalytic subunit, found in Bacillus caldolyticus.